A 327-amino-acid chain; its full sequence is Aspartate carbamoyltransferase catalytic subunit (327 aa).

Carbamoyl phosphate contacts are provided by Arg73 and Thr74. Lys101 serves as a coordination point for L-aspartate. 3 residues coordinate carbamoyl phosphate: Arg123, His153, and Gln156. Arg186 and Arg241 together coordinate L-aspartate. Carbamoyl phosphate is bound by residues Gly282 and Pro283.

It belongs to the aspartate/ornithine carbamoyltransferase superfamily. ATCase family. Heterododecamer (2C3:3R2) of six catalytic PyrB chains organized as two trimers (C3), and six regulatory PyrI chains organized as three dimers (R2).

The catalysed reaction is carbamoyl phosphate + L-aspartate = N-carbamoyl-L-aspartate + phosphate + H(+). The protein operates within pyrimidine metabolism; UMP biosynthesis via de novo pathway; (S)-dihydroorotate from bicarbonate: step 2/3. Catalyzes the condensation of carbamoyl phosphate and aspartate to form carbamoyl aspartate and inorganic phosphate, the committed step in the de novo pyrimidine nucleotide biosynthesis pathway. In Acidithiobacillus ferrooxidans (strain ATCC 23270 / DSM 14882 / CIP 104768 / NCIMB 8455) (Ferrobacillus ferrooxidans (strain ATCC 23270)), this protein is Aspartate carbamoyltransferase catalytic subunit.